Here is a 104-residue protein sequence, read N- to C-terminus: Pyrimidine/purine nucleoside phosphorylase (104 aa).

This sequence belongs to the nucleoside phosphorylase PpnP family.

The catalysed reaction is a purine D-ribonucleoside + phosphate = a purine nucleobase + alpha-D-ribose 1-phosphate. It carries out the reaction adenosine + phosphate = alpha-D-ribose 1-phosphate + adenine. It catalyses the reaction cytidine + phosphate = cytosine + alpha-D-ribose 1-phosphate. The enzyme catalyses guanosine + phosphate = alpha-D-ribose 1-phosphate + guanine. The catalysed reaction is inosine + phosphate = alpha-D-ribose 1-phosphate + hypoxanthine. It carries out the reaction thymidine + phosphate = 2-deoxy-alpha-D-ribose 1-phosphate + thymine. It catalyses the reaction uridine + phosphate = alpha-D-ribose 1-phosphate + uracil. The enzyme catalyses xanthosine + phosphate = alpha-D-ribose 1-phosphate + xanthine. Its function is as follows. Catalyzes the phosphorolysis of diverse nucleosides, yielding D-ribose 1-phosphate and the respective free bases. Can use uridine, adenosine, guanosine, cytidine, thymidine, inosine and xanthosine as substrates. Also catalyzes the reverse reactions. The chain is Pyrimidine/purine nucleoside phosphorylase from Pelobacter propionicus (strain DSM 2379 / NBRC 103807 / OttBd1).